We begin with the raw amino-acid sequence, 470 residues long: Peripherin (470 aa).

The interval 1–99 (MSHHPSGLRA…FLATRSNEKQ (99 aa)) is head. Tyr17 bears the 3'-nitrotyrosine mark. Residues Ser28, Ser50, and Ser59 each carry the phosphoserine modification. In terms of domain architecture, IF rod spans 97-407 (EKQELQELND…KLLEGEESRI (311 aa)). Residues 100-132 (ELQELNDRFANFIEKVRFLEQQNAALRGELSQA) are coil 1A. The tract at residues 133–143 (RGQEPARADQL) is linker 1. Positions 144–239 (CQQELRELRR…KLHEEELRDL (96 aa)) are coil 1B. Residues 240-262 (QVSVESQQVQQVEVEATVKPELT) form a linker 2 region. Residues 263–405 (AALRDIRAQY…YRKLLEGEES (143 aa)) are coil 2. Tyr379 carries the post-translational modification 3'-nitrotyrosine. The tail stretch occupies residues 406–470 (RISVPVHSFA…ELDKSSAHSY (65 aa)). The tract at residues 447 to 470 (NGEVVTESQKEQRSELDKSSAHSY) is disordered. Residues 454–470 (SQKEQRSELDKSSAHSY) show a composition bias toward basic and acidic residues. Residue Tyr470 is modified to Phosphotyrosine.

This sequence belongs to the intermediate filament family. Forms homodimers (in vitro). Homopolymerizes into a filamentous network (in vitro). Forms heterodimers with NEFL, NEFM or NEFH (in vitro). Interacts with DST (via C-terminus). Interacts with RAB7A; the interaction is direct. Interacts with PRKCE (via phorbol-ester/DAG-type 2 domain). Phosphorylated; phosphorylation increases after nerve injury in regenerating neurons. Expressed in the neurons of the outer hair cells in the organ of Corti and to a lesser extent in type I spiral ganglion cells.

It localises to the cytoplasm. It is found in the cytoskeleton. The protein localises to the cell projection. Its subcellular location is the axon. The protein resides in the perikaryon. Class-III neuronal intermediate filament protein. May form an independent structural network without the involvement of other neurofilaments or may cooperate with the neuronal intermediate filament proteins NEFL, NEFH, NEFM and INA to form a filamentous network. Assembly of the neuronal intermediate filaments may be regulated by RAB7A. Plays a role in the development of unmyelinated sensory neurons. May be involved in axon elongation and axon regeneration after injury. Inhibits neurite extension in type II spiral ganglion neurons in the cochlea. The chain is Peripherin (PRPH) from Homo sapiens (Human).